The primary structure comprises 179 residues: Large ribosomal subunit protein uL5 (179 aa).

This sequence belongs to the universal ribosomal protein uL5 family. Part of the 50S ribosomal subunit; part of the 5S rRNA/L5/L18/L25 subcomplex. Contacts the 5S rRNA and the P site tRNA. Forms a bridge to the 30S subunit in the 70S ribosome.

Its function is as follows. This is one of the proteins that bind and probably mediate the attachment of the 5S RNA into the large ribosomal subunit, where it forms part of the central protuberance. In the 70S ribosome it contacts protein S13 of the 30S subunit (bridge B1b), connecting the 2 subunits; this bridge is implicated in subunit movement. Contacts the P site tRNA; the 5S rRNA and some of its associated proteins might help stabilize positioning of ribosome-bound tRNAs. The polypeptide is Large ribosomal subunit protein uL5 (Saccharophagus degradans (strain 2-40 / ATCC 43961 / DSM 17024)).